The primary structure comprises 456 residues: Protein king tubby (456 aa).

The segment at 111–202 (HELEDEESSP…SNGAGGESEG (92 aa)) is disordered. Over residues 120-152 (PVTVIEQQQTAPHSANSTHSQRPSTTRQPSFND) the composition is skewed to polar residues. At Ser-149 the chain carries Phosphoserine.

This sequence belongs to the TUB family.

It is found in the cytoplasm. The protein resides in the nucleus. The protein localises to the cell projection. Its subcellular location is the cilium membrane. It localises to the rhabdomere. This chain is Protein king tubby, found in Drosophila pseudoobscura pseudoobscura (Fruit fly).